Consider the following 151-residue polypeptide: 3-hydroxyacyl-[acyl-carrier-protein] dehydratase FabZ (151 aa).

His54 is a catalytic residue.

Belongs to the thioester dehydratase family. FabZ subfamily.

Its subcellular location is the cytoplasm. It carries out the reaction a (3R)-hydroxyacyl-[ACP] = a (2E)-enoyl-[ACP] + H2O. Functionally, involved in unsaturated fatty acids biosynthesis. Catalyzes the dehydration of short chain beta-hydroxyacyl-ACPs and long chain saturated and unsaturated beta-hydroxyacyl-ACPs. The protein is 3-hydroxyacyl-[acyl-carrier-protein] dehydratase FabZ of Blochmanniella pennsylvanica (strain BPEN).